The chain runs to 269 residues: Eukaryotic translation initiation factor 3 subunit G-1 (269 aa).

One can recognise an RRM domain in the interval 188–266 (AAIRISNLSE…LILSVEWSKP (79 aa)).

It belongs to the eIF-3 subunit G family. As to quaternary structure, component of the eukaryotic translation initiation factor 3 (eIF-3) complex. The eIF-3 complex interacts with pix.

The protein localises to the cytoplasm. RNA-binding component of the eukaryotic translation initiation factor 3 (eIF-3) complex, which is involved in protein synthesis of a specialized repertoire of mRNAs and, together with other initiation factors, stimulates binding of mRNA and methionyl-tRNAi to the 40S ribosome. The eIF-3 complex specifically targets and initiates translation of a subset of mRNAs involved in cell proliferation. This subunit can bind 18S rRNA. This is Eukaryotic translation initiation factor 3 subunit G-1 from Drosophila persimilis (Fruit fly).